The following is a 280-amino-acid chain: Fructose-1,6-bisphosphatase class 1 (280 aa).

Mg(2+)-binding residues include Glu64, Asp83, Leu85, and Asp86. Substrate is bound by residues 86-89 (DGSS), Tyr189, and Lys220. Residue Glu226 participates in Mg(2+) binding.

Belongs to the FBPase class 1 family. In terms of assembly, homotetramer. Mg(2+) is required as a cofactor.

Its subcellular location is the cytoplasm. The catalysed reaction is beta-D-fructose 1,6-bisphosphate + H2O = beta-D-fructose 6-phosphate + phosphate. Its pathway is carbohydrate biosynthesis; gluconeogenesis. The chain is Fructose-1,6-bisphosphatase class 1 from Campylobacter jejuni subsp. jejuni serotype O:2 (strain ATCC 700819 / NCTC 11168).